The sequence spans 537 residues: Di/tripeptide-binding protein 1 (537 aa).

Positions 1–29 are cleaved as a signal peptide; sequence MRRNAVIRSAIMPSLLGAALVAAVPQAFA.

It belongs to the bacterial solute-binding protein 5 family. The complex is composed of two ATP-binding proteins (DppD and DppF), two transmembrane proteins (DppB and DppC) and a solute-binding protein (DppA1). Five orthologous SBPs (DppA1-A5) are present in P.aeruginosa, which increases the substrate specificity of the DppBCDF transporter.

Part of the ABC transporter DppABCDF involved in the uptake of various di/tripeptides. Prefers dipeptides with acidic residues at the C-terminal end. Involved in the uptake of phaseolotoxin, a toxic tripeptide inhibiting the enzyme ornithine carbamoyltransferase. This Pseudomonas aeruginosa (strain UCBPP-PA14) protein is Di/tripeptide-binding protein 1.